The primary structure comprises 167 residues: Mannose-specific lectin (167 aa).

A signal peptide spans 1–24 (MAFSISSTMIFLLSLALFSTLVSA). The 114-residue stretch at 25–138 (DNHLLPGERL…PIFATGTNRF (114 aa)) folds into the Bulb-type lectin domain. The cysteines at positions 53 and 76 are disulfide-linked.

Homotetramer. Expressed in the pseudobulb, with highest levels of expression in the non-swollen internode (at protein level).

The protein resides in the secreted. Its function is as follows. Mannose-specific lectin. Shows agglutinating activity towards chicken erythrocytes. Has antifungal activity against A.alternata and Collectotrichum species. The sequence is that of Mannose-specific lectin from Dendrobium findlayanum (Findlay's orchid).